A 319-amino-acid polypeptide reads, in one-letter code: Acetyl esterase (319 aa).

The Involved in the stabilization of the negatively charged intermediate by the formation of the oxyanion hole signature appears at 91–93; the sequence is HGG. Active-site residues include S165, D262, and H292.

This sequence belongs to the 'GDXG' lipolytic enzyme family. In terms of assembly, homodimer. Interacts with MalT and MelA.

It is found in the cytoplasm. In terms of biological role, displays esterase activity towards short chain fatty esters (acyl chain length of up to 8 carbons). Able to hydrolyze triacetylglycerol (triacetin) and tributyrylglycerol (tributyrin), but not trioleylglycerol (triolein) or cholesterol oleate. Negatively regulates MalT activity by antagonizing maltotriose binding. Inhibits MelA galactosidase activity. This Escherichia coli O139:H28 (strain E24377A / ETEC) protein is Acetyl esterase.